The sequence spans 482 residues: BTB/POZ domain-containing protein 6-B (482 aa).

The 71-residue stretch at 80–150 folds into the BTB domain; sequence ADVHFVVGPP…MYSDEIELEA (71 aa).

As to quaternary structure, interacts with cul3. Interacts (via BTB domain) with zbtb16/plzf. In terms of tissue distribution, in embryos, expressed in the cranial ganglia.

It localises to the cytoplasm. It is found in the nucleus. Adapter protein for the cul3 E3 ubiquitin-protein ligase complex. Promotes the export of zbtb16/plzf from the nucleus to the cytoplasm and targets zbtb16/plzf for ubiquitination and degradation. Up-regulates neurog1 expression and antagonizes zbtb16/plzf, to promote neurogenesis. The sequence is that of BTB/POZ domain-containing protein 6-B (btbd6b) from Danio rerio (Zebrafish).